Reading from the N-terminus, the 289-residue chain is Right origin-binding protein (289 aa).

The 99-residue stretch at 8–106 (RDLLIWLEGH…AQTPALYRRS (99 aa)) folds into the HTH araC/xylS-type domain. DNA-binding regions (H-T-H motif) lie at residues 25–46 (DNVA…KDVT) and 73–96 (ILDI…KKQF).

Transcriptional regulator. Binds to the right arm of the replication origin oriC of the chromosome. Rob binding may influence the formation of the nucleoprotein structure, required for oriC function in the initiation of replication. The protein is Right origin-binding protein (rob) of Escherichia coli O157:H7.